The sequence spans 331 residues: POU domain, class 4, transcription factor 3 (331 aa).

Residues 81-97 (TSSSSTVPISHPSSNLP) are compositionally biased toward low complexity. A disordered region spans residues 81–108 (TSSSSTVPISHPSSNLPSHHHHHLSHQT). The POU-specific domain maps to 172–249 (DVESDPRELE…VLQAWLEEAE (78 aa)). Residues 267–326 (RKRKRTSIAAPEKRSLEAYFAIQPRPSSEKIAAIAEKLDLKKNVVRVWFCNQRQKQKRMK) constitute a DNA-binding region (homeobox).

The protein belongs to the POU transcription factor family. Class-4 subfamily. In terms of assembly, interaction with ISL1. Expressed in the nervous system. Expressed in the otic vesicle during embryogenesis. Expressed in the adult retina in a subset of retinal ganglion cells (RGCs), and at a lower level in the adult tectum. Not expressed in the adult olfactory bulb.

The protein localises to the nucleus. Its subcellular location is the cytoplasm. Acts as a transcriptional activator. Acts by binding to sequences related to the consensus octamer motif 5'-ATGCAAAT-3' in the regulatory regions of its target genes. May play a role in specifying terminally differentiated neuronal phenotypes. This Danio rerio (Zebrafish) protein is POU domain, class 4, transcription factor 3 (pou4f3).